The chain runs to 65 residues: Putative beta-neurotoxin RjAa2 (65 aa).

The LCN-type CS-alpha/beta domain maps to 1–64 (KEGYPMGRDG…VWDSSTNKCG (64 aa)). 4 disulfides stabilise this stretch: C11/C63, C15/C37, C22/C44, and C26/C46.

This sequence belongs to the long (4 C-C) scorpion toxin superfamily. Sodium channel inhibitor family. Beta subfamily. As to expression, expressed by the venom gland.

The protein resides in the secreted. Beta toxins bind voltage-independently at site-4 of sodium channels (Nav) and shift the voltage of activation toward more negative potentials thereby affecting sodium channel activation and promoting spontaneous and repetitive firing. In Rhopalurus junceus (Caribbean blue scorpion), this protein is Putative beta-neurotoxin RjAa2.